Consider the following 500-residue polypeptide: Protein nucleotidyltransferase YdiU (500 aa).

ATP-binding residues include Gly-96, Gly-98, Arg-99, Lys-119, Asp-131, Gly-132, Arg-182, and Arg-189. Asp-258 acts as the Proton acceptor in catalysis. Mg(2+) is bound by residues Asn-259 and Asp-268. Residue Asp-268 coordinates ATP.

It belongs to the SELO family. Requires Mg(2+) as cofactor. Mn(2+) serves as cofactor.

It carries out the reaction L-seryl-[protein] + ATP = 3-O-(5'-adenylyl)-L-seryl-[protein] + diphosphate. It catalyses the reaction L-threonyl-[protein] + ATP = 3-O-(5'-adenylyl)-L-threonyl-[protein] + diphosphate. The catalysed reaction is L-tyrosyl-[protein] + ATP = O-(5'-adenylyl)-L-tyrosyl-[protein] + diphosphate. The enzyme catalyses L-histidyl-[protein] + UTP = N(tele)-(5'-uridylyl)-L-histidyl-[protein] + diphosphate. It carries out the reaction L-seryl-[protein] + UTP = O-(5'-uridylyl)-L-seryl-[protein] + diphosphate. It catalyses the reaction L-tyrosyl-[protein] + UTP = O-(5'-uridylyl)-L-tyrosyl-[protein] + diphosphate. In terms of biological role, nucleotidyltransferase involved in the post-translational modification of proteins. It can catalyze the addition of adenosine monophosphate (AMP) or uridine monophosphate (UMP) to a protein, resulting in modifications known as AMPylation and UMPylation. This chain is Protein nucleotidyltransferase YdiU, found in Rhizobium johnstonii (strain DSM 114642 / LMG 32736 / 3841) (Rhizobium leguminosarum bv. viciae).